Reading from the N-terminus, the 126-residue chain is Probable 4-amino-4-deoxy-L-arabinose-phosphoundecaprenol flippase subunit ArnF (126 aa).

The Cytoplasmic portion of the chain corresponds to 1-4 (MKGY). The helical transmembrane segment at 5-25 (IWGLISVLLVTIAQLLLKWGV) threads the bilayer. At 26–49 (VNLPALNLGLHWFDIEWLWSHRHS) the chain is on the periplasmic side. The chain crosses the membrane as a helical span at residues 50–70 (LVAVMAGLAGYLLSMLCWLFT). The Cytoplasmic portion of the chain corresponds to 71–79 (LKYLPLNKA). Residues 80–100 (YPLISLSYVFVYLMVALLPWF) traverse the membrane as a helical segment. Residues 101–102 (NE) lie on the Periplasmic side of the membrane. A helical membrane pass occupies residues 103–123 (TITLLKTAGVIFILYGVWLIS). At 124 to 126 (RPE) the chain is on the cytoplasmic side.

It belongs to the ArnF family. In terms of assembly, heterodimer of ArnE and ArnF.

Its subcellular location is the cell inner membrane. The protein operates within bacterial outer membrane biogenesis; lipopolysaccharide biosynthesis. Functionally, translocates 4-amino-4-deoxy-L-arabinose-phosphoundecaprenol (alpha-L-Ara4N-phosphoundecaprenol) from the cytoplasmic to the periplasmic side of the inner membrane. The protein is Probable 4-amino-4-deoxy-L-arabinose-phosphoundecaprenol flippase subunit ArnF of Photorhabdus laumondii subsp. laumondii (strain DSM 15139 / CIP 105565 / TT01) (Photorhabdus luminescens subsp. laumondii).